Reading from the N-terminus, the 692-residue chain is MAREFSLAKTRNIGIMAHVDAGKTTTTERILYYTGKIHKIGETHEGASQMDWMEQEQERGITITSAATTAQWDGHRVNIIDTPGHVDFTIEVQRSLRVLDGAVTVLDSQSGVEPQTETVWRQATEYGVPRIVFANKMDKIGADFLYSVQTLHDRLQANAHPIQLPIGAEDDFRGIIDLIKMKAEIYTNDLGTDILEEDIPEEYLEQAQESREKLIEAVAETDEDLMMKYLEGEEITNDELIAGIRKATINVEFFPVLCGSAFKNKGVQLMLDAVIAYLPSPLDIPAIKGVNPDTDAEEERPASDEEPFAALAFKIMTDPFVGRLTFFRVYSGVLNSGSYVMNTSKGKRERIGRILQMHANSRQEIETVYAGDIAAAVGLKDTTTGDSLTDEKAKVILESIEVPEPVIQLMVEPKSKADQDKMGVALQKLAEEDPTFRVETNVETGETVIAGMGELHLDVLVDRMKREFKVEANVGAPQVSYRETFRASTQARGFFKRQSGGKGQFGDVWIEFTPNEEGKGFEFENAIVGGVVPREFIPAVEKGLIESMANGVLAGYPMVDVKAKLYDGSYHDVDSSETAFKIAASLALKEAAKSAQPAILEPMMLVTITAPEDNLGDVMGHVTARRGRVDGMEAHGNSQIVRAYVPLAEMFGYATVLRSATQGRGTFMMVFDHYEDVPKSVQEEIIKKTKGE.

Positions 8-282 (AKTRNIGIMA…AVIAYLPSPL (275 aa)) constitute a tr-type G domain. GTP is bound by residues 17–24 (AHVDAGKT), 81–85 (DTPGH), and 135–138 (NKMD).

Belongs to the TRAFAC class translation factor GTPase superfamily. Classic translation factor GTPase family. EF-G/EF-2 subfamily.

The protein localises to the cytoplasm. In terms of biological role, catalyzes the GTP-dependent ribosomal translocation step during translation elongation. During this step, the ribosome changes from the pre-translocational (PRE) to the post-translocational (POST) state as the newly formed A-site-bound peptidyl-tRNA and P-site-bound deacylated tRNA move to the P and E sites, respectively. Catalyzes the coordinated movement of the two tRNA molecules, the mRNA and conformational changes in the ribosome. This chain is Elongation factor G, found in Streptococcus pyogenes serotype M49 (strain NZ131).